We begin with the raw amino-acid sequence, 349 residues long: C-X-C chemokine receptor type 4 (349 aa).

Residues 1–18 (MEIYTSDNYSEEVGSGDY) are important for chemokine binding and signaling. Residues 1–23 (MEIYTSDNYSEEVGSGDYDSNKE) form a disordered region. Over 1 to 35 (MEIYTSDNYSEEVGSGDYDSNKEPCFRDENENFNR) the chain is Extracellular. N-linked (GlcNAc...) asparagine glycosylation is present at asparagine 8. Position 9 is a sulfotyrosine (tyrosine 9). Serine 15 carries O-linked (Xyl...) (chondroitin sulfate) serine glycosylation. Residue tyrosine 18 is modified to Sulfotyrosine. 2 cysteine pairs are disulfide-bonded: cysteine 25/cysteine 271 and cysteine 106/cysteine 183. A helical transmembrane segment spans residues 36-60 (IFLPTIYFIIFLTGIVGNGLVILVM). At 61-74 (GYQKKLRSMTDKYR) the chain is on the cytoplasmic side. A helical transmembrane segment spans residues 75–96 (LHLSVADLLFVITLPFWAVDAM). The segment at 91–94 (WAVD) is chemokine binding. Residues 97–107 (ADWYFGKFLCK) lie on the Extracellular side of the membrane. The helical transmembrane segment at 108 to 127 (AVHIIYTVNLYSSVLILAFI) threads the bilayer. The interval 110–114 (HIIYT) is chemokine binding. Residues 128–151 (SLDRYLAIVHATNSQRPRKLLAEK) are Cytoplasmic-facing. The Important for signaling signature appears at 130 to 132 (DRY). The involved in dimerization; when bound to chemokine stretch occupies residues 132–144 (YLAIVHATNSQRP). Residues 152–171 (AVYVGVWIPALLLTIPDIIF) form a helical membrane-spanning segment. Residues 172–192 (ADVSQGDGRYICDRLYPDSLW) lie on the Extracellular side of the membrane. The chemokine binding, important for signaling stretch occupies residues 183–187 (CDRLY). Residues 188 to 207 (PDSLWMVVFQFQHIMVGLIL) are involved in dimerization. Residues 193-213 (MVVFQFQHIMVGLILPGIVIL) form a helical membrane-spanning segment. The Cytoplasmic portion of the chain corresponds to 214–238 (SCYCIIISKLSHSKGHQKRKALKTT). A helical membrane pass occupies residues 239–258 (VILILAFFACWLPYYVGISI). Residues 259 to 279 (DSFILLEVIKQGCEFESVVHK) lie on the Extracellular side of the membrane. The interval 263-265 (LLE) is involved in dimerization. Residues 280 to 299 (WISITEALAFFHCCLNPILY) traverse the membrane as a helical segment. Residues 300-349 (AFLGAKFKSSAQHALNSMSRGSSLKILSKGKRGGHSSVSTESESSSFHSS) lie on the Cytoplasmic side of the membrane. A phosphoserine mark is found at serine 316 and serine 318. Phosphoserine; by PKC and GRK6 occurs at positions 321 and 322. A disordered region spans residues 325–349 (ILSKGKRGGHSSVSTESESSSFHSS). Residue serine 327 is modified to Phosphoserine; by GRK6. Residue lysine 328 forms a Glycyl lysine isopeptide (Lys-Gly) (interchain with G-Cter in ubiquitin) linkage. Positions 334 to 349 (HSSVSTESESSSFHSS) are enriched in low complexity. Residue serine 336 is modified to Phosphoserine; by GRK6. 2 positions are modified to phosphoserine: serine 345 and serine 348.

The protein belongs to the G-protein coupled receptor 1 family. As to quaternary structure, monomer. Can form homodimers. Interacts with CD164. Interacts with ARRB2; the interaction is dependent on the C-terminal phosphorylation of CXCR4 and allows activation of MAPK1 and MAPK3. Interacts with ARR3; the interaction is dependent on the C-terminal phosphorylation of CXCR4 and modulates calcium mobilization. Interacts with RNF113A; the interaction, enhanced by CXCL12, promotes CXCR4 ubiquitination and subsequent degradation. Interacts (via the cytoplasmic C-terminal) with ITCH (via the WW domains I and II); the interaction, enhanced by CXCL12, promotes CXCR4 ubiquitination and leads to its degradation. Interacts with extracellular ubiquitin. Interacts with DBN1; this interaction is enhanced by antigenic stimulation. Following LPS binding, may form a complex with GDF5, HSP90AA1 and HSPA8. Phosphorylated on agonist stimulation. Rapidly phosphorylated on serine and threonine residues in the C-terminal. Phosphorylation at Ser-321 and Ser-322 leads to recruitment of ITCH, ubiquitination and protein degradation. In terms of processing, ubiquitinated after ligand binding, leading to its degradation. Ubiquitinated by ITCH at the cell membrane on agonist stimulation. The ubiquitin-dependent mechanism, endosomal sorting complex required for transport (ESCRT), then targets CXCR4 for lysosomal degradation. This process is dependent also on prior Ser-/Thr-phosphorylation in the C-terminal of CXCR4. Also binding of ARRB1 to STAM negatively regulates CXCR4 sorting to lysosomes though modulating ubiquitination of SFR5S. Post-translationally, sulfation is required for efficient binding of CXCL12/SDF-1alpha and promotes its dimerization. O- and N-glycosylated. N-glycosylation can mask coreceptor function. The O-glycosylation chondroitin sulfate attachment does not affect interaction with CXCL12/SDF-1alpha nor its coreceptor activity.

Its subcellular location is the cell membrane. It is found in the cell junction. The protein localises to the early endosome. It localises to the late endosome. The protein resides in the lysosome. Receptor for the C-X-C chemokine CXCL12/SDF-1 that transduces a signal by increasing intracellular calcium ion levels and enhancing MAPK1/MAPK3 activation. Involved in the AKT signaling cascade. Plays a role in regulation of cell migration, e.g. during wound healing. Acts as a receptor for extracellular ubiquitin; leading to enhanced intracellular calcium ions and reduced cellular cAMP levels. Binds bacterial lipopolysaccharide (LPS) et mediates LPS-induced inflammatory response, including TNF secretion by monocytes. Involved in hematopoiesis and in cardiac ventricular septum formation. Also plays an essential role in vascularization of the gastrointestinal tract, probably by regulating vascular branching and/or remodeling processes in endothelial cells. Involved in cerebellar development. In the CNS, could mediate hippocampal-neuron survival. The polypeptide is C-X-C chemokine receptor type 4 (Cxcr4) (Rattus norvegicus (Rat)).